Consider the following 333-residue polypeptide: 4-hydroxy-3-methylbut-2-enyl diphosphate reductase (333 aa).

[4Fe-4S] cluster is bound at residue cysteine 34. (2E)-4-hydroxy-3-methylbut-2-enyl diphosphate contacts are provided by histidine 63 and histidine 96. Histidine 63 and histidine 96 together coordinate dimethylallyl diphosphate. Isopentenyl diphosphate-binding residues include histidine 63 and histidine 96. A [4Fe-4S] cluster-binding site is contributed by cysteine 118. Histidine 146 lines the (2E)-4-hydroxy-3-methylbut-2-enyl diphosphate pocket. A dimethylallyl diphosphate-binding site is contributed by histidine 146. Histidine 146 provides a ligand contact to isopentenyl diphosphate. The Proton donor role is filled by glutamate 148. Threonine 186 serves as a coordination point for (2E)-4-hydroxy-3-methylbut-2-enyl diphosphate. A [4Fe-4S] cluster-binding site is contributed by cysteine 216. (2E)-4-hydroxy-3-methylbut-2-enyl diphosphate-binding residues include serine 244, serine 245, asparagine 246, and serine 289. Residues serine 244, serine 245, asparagine 246, and serine 289 each contribute to the dimethylallyl diphosphate site. Isopentenyl diphosphate is bound by residues serine 244, serine 245, asparagine 246, and serine 289.

This sequence belongs to the IspH family. It depends on [4Fe-4S] cluster as a cofactor.

The catalysed reaction is isopentenyl diphosphate + 2 oxidized [2Fe-2S]-[ferredoxin] + H2O = (2E)-4-hydroxy-3-methylbut-2-enyl diphosphate + 2 reduced [2Fe-2S]-[ferredoxin] + 2 H(+). The enzyme catalyses dimethylallyl diphosphate + 2 oxidized [2Fe-2S]-[ferredoxin] + H2O = (2E)-4-hydroxy-3-methylbut-2-enyl diphosphate + 2 reduced [2Fe-2S]-[ferredoxin] + 2 H(+). It participates in isoprenoid biosynthesis; dimethylallyl diphosphate biosynthesis; dimethylallyl diphosphate from (2E)-4-hydroxy-3-methylbutenyl diphosphate: step 1/1. The protein operates within isoprenoid biosynthesis; isopentenyl diphosphate biosynthesis via DXP pathway; isopentenyl diphosphate from 1-deoxy-D-xylulose 5-phosphate: step 6/6. Functionally, catalyzes the conversion of 1-hydroxy-2-methyl-2-(E)-butenyl 4-diphosphate (HMBPP) into a mixture of isopentenyl diphosphate (IPP) and dimethylallyl diphosphate (DMAPP). Acts in the terminal step of the DOXP/MEP pathway for isoprenoid precursor biosynthesis. The protein is 4-hydroxy-3-methylbut-2-enyl diphosphate reductase of Mycolicibacterium gilvum (strain PYR-GCK) (Mycobacterium gilvum (strain PYR-GCK)).